Reading from the N-terminus, the 517-residue chain is Serine O-succinyltransferase (517 aa).

Residues 1 to 46 (MSPLNGVARSFPRPFQAVTRRPFRVVQPAIACPSNSRSFNHSRSLR) constitute a mitochondrion transit peptide. A compositionally biased stretch (polar residues) spans 36 to 64 (SRSFNHSRSLRSTGSQSPAPSPRDSSNPA). Residues 36 to 66 (SRSFNHSRSLRSTGSQSPAPSPRDSSNPALS) form a disordered region. The 253-residue stretch at 134–386 (NVILLHTGLS…LTQQLATKKQ (253 aa)) folds into the AB hydrolase-1 domain. The segment at 141–144 (GLSA) is important for substrate specificity. Residue serine 238 is the Nucleophile of the active site. Arginine 307 contacts substrate. The segment at 413–436 (QPYQEQPSASTSAEQSASASETGS) is disordered. The span at 416–436 (QEQPSASTSAEQSASASETGS) shows a compositional bias: low complexity. Active-site residues include aspartate 461 and histidine 498. Aspartate 499 contributes to the substrate binding site.

The protein belongs to the AB hydrolase superfamily. MetX family.

It is found in the mitochondrion. It catalyses the reaction succinyl-CoA + L-serine = O-succinyl-L-serine + CoA. The protein operates within amino-acid biosynthesis; L-cysteine biosynthesis; L-cysteine from L-serine: step 1/2. Its function is as follows. Transfers a succinyl group from succinyl-CoA to L-serine, forming succinyl-L-serine. Also has weak serine acetyl transferase activity and homoserine succinyl transferase activity. The sequence is that of Serine O-succinyltransferase from Emericella nidulans (strain FGSC A4 / ATCC 38163 / CBS 112.46 / NRRL 194 / M139) (Aspergillus nidulans).